Consider the following 283-residue polypeptide: NAD kinase (283 aa).

The active-site Proton acceptor is aspartate 68. Residues 68–69, arginine 73, 142–143, arginine 153, arginine 170, aspartate 172, and 183–188 contribute to the NAD(+) site; these read DG, ND, and TAYSLS.

Belongs to the NAD kinase family. The cofactor is a divalent metal cation.

It localises to the cytoplasm. The enzyme catalyses NAD(+) + ATP = ADP + NADP(+) + H(+). Functionally, involved in the regulation of the intracellular balance of NAD and NADP, and is a key enzyme in the biosynthesis of NADP. Catalyzes specifically the phosphorylation on 2'-hydroxyl of the adenosine moiety of NAD to yield NADP. This Symbiobacterium thermophilum (strain DSM 24528 / JCM 14929 / IAM 14863 / T) protein is NAD kinase.